A 482-amino-acid chain; its full sequence is UDP-N-acetylmuramate--L-alanine ligase (482 aa).

Residue 129-135 coordinates ATP; sequence GTHGKTT.

Belongs to the MurCDEF family.

The protein resides in the cytoplasm. The catalysed reaction is UDP-N-acetyl-alpha-D-muramate + L-alanine + ATP = UDP-N-acetyl-alpha-D-muramoyl-L-alanine + ADP + phosphate + H(+). Its pathway is cell wall biogenesis; peptidoglycan biosynthesis. Functionally, cell wall formation. The polypeptide is UDP-N-acetylmuramate--L-alanine ligase (Acinetobacter baumannii (strain AB307-0294)).